The sequence spans 475 residues: Aminodeoxychorismate synthase component 1 (475 aa).

It belongs to the anthranilate synthase component I family. Monomer. Heterodimer consisting of two non-identical subunits: a glutamine amidotransferase subunit (PabA) and a aminodeoxychorismate synthase subunit (PabB). Mg(2+) is required as a cofactor.

It catalyses the reaction chorismate + L-glutamine = 4-amino-4-deoxychorismate + L-glutamate. The protein operates within cofactor biosynthesis; tetrahydrofolate biosynthesis; 4-aminobenzoate from chorismate: step 1/2. In terms of biological role, part of a heterodimeric complex that catalyzes the two-step biosynthesis of 4-amino-4-deoxychorismate (ADC), a precursor of p-aminobenzoate (PABA) and tetrahydrofolate. In the first step, a glutamine amidotransferase (PabA) generates ammonia as a substrate that, along with chorismate, is used in the second step, catalyzed by aminodeoxychorismate synthase (PabB) to produce ADC. This chain is Aminodeoxychorismate synthase component 1 (pabB), found in Streptomyces lividans.